A 345-amino-acid polypeptide reads, in one-letter code: Transcription initiation factor IIB (345 aa).

The segment at 20-53 (IVLTCPECKVYPPKIVERFSEGDVVCALCGLVLS) adopts a TFIIB-type zinc-finger fold. The Zn(2+) site is built by cysteine 24, cysteine 27, cysteine 45, and cysteine 48. Basic and acidic residues predominate over residues 65–78 (TFSNDDHNGDDPSR). Positions 65–93 (TFSNDDHNGDDPSRVGEASNPLLDGNNLS) are disordered. 2 consecutive repeat copies span residues 136–212 (LCDA…IMKN) and 242–318 (FCSH…ILYE).

The protein belongs to the TFIIB family. Associates with TFIID-IIA (DA complex) to form TFIID-IIA-IIB (DAB-complex) which is then recognized by polymerase II.

The protein resides in the nucleus. General factor that plays a major role in the activation of eukaryotic genes transcribed by RNA polymerase II. This is Transcription initiation factor IIB (SUA7) from Saccharomyces cerevisiae (strain ATCC 204508 / S288c) (Baker's yeast).